The chain runs to 100 residues: Urease subunit gamma (100 aa).

The protein belongs to the urease gamma subunit family. In terms of assembly, heterotrimer of UreA (gamma), UreB (beta) and UreC (alpha) subunits. Three heterotrimers associate to form the active enzyme.

The protein localises to the cytoplasm. The catalysed reaction is urea + 2 H2O + H(+) = hydrogencarbonate + 2 NH4(+). It functions in the pathway nitrogen metabolism; urea degradation; CO(2) and NH(3) from urea (urease route): step 1/1. In Frankia alni (strain DSM 45986 / CECT 9034 / ACN14a), this protein is Urease subunit gamma.